An 81-amino-acid polypeptide reads, in one-letter code: U6-theraphotoxin-Hs1a (81 aa).

The first 21 residues, 1 to 21, serve as a signal peptide directing secretion; sequence MKASMFLALAGLVLLFVVCYA. A propeptide spanning residues 22–48 is cleaved from the precursor; that stretch reads SESEEKEFPRELLSTIFAVDDFKGEER. Cystine bridges form between cysteine 50/cysteine 65 and cysteine 57/cysteine 70.

Belongs to the neurotoxin 10 (Hwtx-1) family. 51 (Hntx-8) subfamily. As to expression, expressed by the venom gland.

Its subcellular location is the secreted. Functionally, binds to the nicotinic acetylcholine receptor. Blocks neuromuscular transmission. The polypeptide is U6-theraphotoxin-Hs1a (Cyriopagopus schmidti (Chinese bird spider)).